The primary structure comprises 512 residues: Immunoglobulin delta heavy chain (512 aa).

2 consecutive Ig-like domains span residues 1-97 and 135-227; these read RLQL…MYYC and PDVF…KEIF. The segment at 1 to 129 is variable (V) domain, involved in antigen recognition; it reads RLQLQESGPG…GQGTTVHVSS (129 aa). 2 disulfides stabilise this stretch: C22-C97 and C157-C213. Residues 130–512 form a constant (C) domain region; that stretch reads APTKAPDVFP…VSYVTDHGPM (383 aa). Residues 225–296 form a disordered region; that stretch reads EIFRWPESPK…TPECPSHTQP (72 aa). The segment covering 235–247 has biased composition (polar residues); sequence AQASSVPTAQPQA. O-linked (GalNAc...) serine glycosylation is present at S238. T255, T256, T260, and T261 each carry an O-linked (GalNAc...) threonine glycan. Positions 267 to 287 are enriched in basic and acidic residues; sequence GGEEKKKEKEKEEQEERETKT. Ig-like domains follow at residues 304–392 and 396–502; these read PAVQ…RLMA and PAAQ…RSLE. Intrachain disulfides connect C319-C378 and C423-C484. N-linked (GlcNAc...) asparagine glycans are attached at residues N354, N445, and N496.

Immunoglobulins are composed of two identical heavy chains and two identical light chains; disulfide-linked. An IgD molecule contains thus a delta heavy chain combined with either a kappa or a lambda light chains. Kappa light chains are found predominantly on the membrane IgD (mIgD) form and lambda on the secreted IgD (sIgD) form, this fact is poorly understood. Membrane-bound IgD molecules are non-covalently associated with a heterodimer of CD79A and CD79B.

It localises to the secreted. Its subcellular location is the cell membrane. Immunoglobulins, also known as antibodies, are membrane-bound or secreted glycoproteins produced by B lymphocytes. In the recognition phase of humoral immunity, the membrane-bound immunoglobulins serve as receptors which, upon binding of a specific antigen, trigger the clonal expansion and differentiation of B lymphocytes into immunoglobulins-secreting plasma cells. Secreted immunoglobulins mediate the effector phase of humoral immunity, which results in the elimination of bound antigens. The antigen binding site is formed by the variable domain of one heavy chain, together with that of its associated light chain. Thus, each immunoglobulin has two antigen binding sites with remarkable affinity for a particular antigen. The variable domains are assembled by a process called V-(D)-J rearrangement and can then be subjected to somatic hypermutations which, after exposure to antigen and selection, allow affinity maturation for a particular antigen. IgD is the major antigen receptor isotype on the surface of most peripheral B cells, where it is coexpressed with IgM. The membrane-bound IgD (mIgD) induces the phosphorylation of CD79A and CD79B by the Src family of protein tyrosine kinases. Soluble IgD (sIgD) concentration in serum is below those of IgG, IgA, and IgM but much higher than that of IgE. IgM and IgD molecules present on B cells have identical V regions and antigen-binding sites. After the antigen binds to the B cell receptor, the secreted form sIgD is shut off. IgD is a potent inducer of TNF, IL1B, and IL1RN. IgD also induces release of IL6, IL10, and LIF from peripheral blood mononuclear cells. Monocytes seem to be the main producers of cytokines in vitro in the presence of IgD. This Homo sapiens (Human) protein is Immunoglobulin delta heavy chain.